The chain runs to 410 residues: 2-oxoisovalerate dehydrogenase subunit alpha (410 aa).

It belongs to the BCKDHA family. As to quaternary structure, heterodimer of an alpha and a beta chain. Requires thiamine diphosphate as cofactor.

It carries out the reaction N(6)-[(R)-lipoyl]-L-lysyl-[protein] + 3-methyl-2-oxobutanoate + H(+) = N(6)-[(R)-S(8)-2-methylpropanoyldihydrolipoyl]-L-lysyl-[protein] + CO2. Functionally, the branched-chain alpha-keto dehydrogenase complex catalyzes the overall conversion of alpha-keto acids to acyl-CoA and CO(2). It contains multiple copies of three enzymatic components: branched-chain alpha-keto acid decarboxylase (E1), lipoamide acyltransferase (E2) and lipoamide dehydrogenase (E3). In Pseudomonas putida (Arthrobacter siderocapsulatus), this protein is 2-oxoisovalerate dehydrogenase subunit alpha (bkdA1).